The chain runs to 160 residues: Eukaryotic translation initiation factor 5A (160 aa).

The span at M1 to A12 shows a compositional bias: basic and acidic residues. Positions M1 to P21 are disordered. K52 carries the post-translational modification Hypusine.

The protein belongs to the eIF-5A family. Lys-53 undergoes hypusination, a unique post-translational modification that consists in the addition of a butylamino group from spermidine to lysine side chain, leading to the formation of the unusual amino acid hypusine. eIF-5As are the only known proteins to undergo this modification, which is essential for their function.

Its function is as follows. Translation factor that promotes translation elongation and termination, particularly upon ribosome stalling at specific amino acid sequence contexts. Binds between the exit (E) and peptidyl (P) site of the ribosome and promotes rescue of stalled ribosome: specifically required for efficient translation of polyproline-containing peptides as well as other motifs that stall the ribosome. Acts as a ribosome quality control (RQC) cofactor by joining the RQC complex to facilitate peptidyl transfer during CAT tailing step. The polypeptide is Eukaryotic translation initiation factor 5A (Manihot esculenta (Cassava)).